Reading from the N-terminus, the 476-residue chain is Cysteine--tRNA ligase (476 aa).

A Zn(2+)-binding site is contributed by Cys-29. Residues 31–41 (PTVYDYPHLGH) carry the 'HIGH' region motif. Zn(2+)-binding residues include Cys-209, His-234, and Glu-238. Residues 266-270 (KMSKS) carry the 'KMSKS' region motif. Lys-269 lines the ATP pocket.

This sequence belongs to the class-I aminoacyl-tRNA synthetase family. It depends on Zn(2+) as a cofactor.

It is found in the cytoplasm. It catalyses the reaction tRNA(Cys) + L-cysteine + ATP = L-cysteinyl-tRNA(Cys) + AMP + diphosphate. The polypeptide is Cysteine--tRNA ligase (cysS) (Pyrococcus horikoshii (strain ATCC 700860 / DSM 12428 / JCM 9974 / NBRC 100139 / OT-3)).